Here is a 317-residue protein sequence, read N- to C-terminus: 17-beta-hydroxysteroid dehydrogenase type 6 (317 aa).

The first 17 residues, 1–17, serve as a signal peptide directing secretion; the sequence is MWLYLAVLLGLYYLLRW. 33–57 is an NAD(+) binding site; the sequence is FITGCDSGFGNQLARQLDLRGLRVL. N-linked (GlcNAc...) asparagine glycans are attached at residues asparagine 71 and asparagine 161. Substrate is bound at residue serine 164. Residue tyrosine 176 is the Proton acceptor of the active site.

The protein belongs to the short-chain dehydrogenases/reductases (SDR) family.

Its subcellular location is the microsome membrane. The protein localises to the endoplasmic reticulum membrane. The enzyme catalyses all-trans-retinol--[retinol-binding protein] + NAD(+) = all-trans-retinal--[retinol-binding protein] + NADH + H(+). The catalysed reaction is all-trans-retinol + NAD(+) = all-trans-retinal + NADH + H(+). It catalyses the reaction androsterone + NAD(+) = 5alpha-androstan-3,17-dione + NADH + H(+). It carries out the reaction testosterone + NAD(+) = androst-4-ene-3,17-dione + NADH + H(+). The enzyme catalyses 5alpha-androstane-3alpha,17beta-diol + NAD(+) = 17beta-hydroxy-5alpha-androstan-3-one + NADH + H(+). The catalysed reaction is 17beta-estradiol + NAD(+) = estrone + NADH + H(+). It catalyses the reaction 17beta-estradiol + NADP(+) = estrone + NADPH + H(+). It carries out the reaction 3alpha-hydroxy-5alpha-pregnan-20-one + NAD(+) = 5alpha-pregnane-3,20-dione + NADH + H(+). The enzyme catalyses 5alpha-androstane-3beta,17beta-diol + NAD(+) = 17beta-hydroxy-5alpha-androstan-3-one + NADH + H(+). The catalysed reaction is 3beta-hydroxy-5alpha-androstan-17-one + NAD(+) = 5alpha-androstan-3,17-dione + NADH + H(+). Its function is as follows. NAD-dependent oxidoreductase with broad substrate specificity that shows both oxidative and reductive activity (in vitro). Has 17-beta-hydroxysteroid dehydrogenase activity towards various steroids (in vitro). Converts 5-alpha-androstan-3-alpha,17-beta-diol to androsterone and estradiol to estrone (in vitro). Has 3-alpha-hydroxysteroid dehydrogenase activity towards androsterone (in vitro). Has retinol dehydrogenase activity towards all-trans-retinol (in vitro). Can convert androsterone to epi-androsterone. Androsterone is first oxidized to 5-alpha-androstane-3,17-dione and then reduced to epi-andosterone. Can act on both C-19 and C-21 3-alpha-hydroxysteroids. The polypeptide is 17-beta-hydroxysteroid dehydrogenase type 6 (HSD17B6) (Bos taurus (Bovine)).